The primary structure comprises 227 residues: uncharacterized protein (227 aa).

The next 4 membrane-spanning stretches (helical) occupy residues 17 to 37 (VGIKGYLAFFLTIIFFSGVFS), 79 to 99 (GFLFALELAPSVILSLGIISI), 112 to 132 (LMTPVLKPLLGIPGICSLALI), and 181 to 201 (VAVFAFLGTSVIVPLAVILVF).

It localises to the cell membrane. This is an uncharacterized protein from Escherichia coli (strain K12).